An 87-amino-acid chain; its full sequence is MKIKNSYLVIASLLYPISFISTAASLTVEQRLAALENDLQETKQELQRYKEQEKKNKAITLVRVNSAADADNKSNAFNVAKTATPIA.

The first 23 residues, 1-23, serve as a signal peptide directing secretion; sequence MKIKNSYLVIASLLYPISFISTA.

It belongs to the porin LamB (TC 1.B.3) family.

The protein resides in the cell outer membrane. Functionally, may be a sugar porin with a broad carbohydrate specificity. The polypeptide is Putative outer membrane protein ArbH (arbH) (Dickeya chrysanthemi (Pectobacterium chrysanthemi)).